We begin with the raw amino-acid sequence, 393 residues long: Lipid-A-disaccharide synthase (393 aa).

Belongs to the LpxB family.

It carries out the reaction a lipid X + a UDP-2-N,3-O-bis[(3R)-3-hydroxyacyl]-alpha-D-glucosamine = a lipid A disaccharide + UDP + H(+). It participates in bacterial outer membrane biogenesis; LPS lipid A biosynthesis. Condensation of UDP-2,3-diacylglucosamine and 2,3-diacylglucosamine-1-phosphate to form lipid A disaccharide, a precursor of lipid A, a phosphorylated glycolipid that anchors the lipopolysaccharide to the outer membrane of the cell. The chain is Lipid-A-disaccharide synthase from Colwellia psychrerythraea (strain 34H / ATCC BAA-681) (Vibrio psychroerythus).